Here is a 195-residue protein sequence, read N- to C-terminus: uncharacterized protein (195 aa).

Positions 1 to 35 are disordered; sequence MASSSSAALRPFGTARLTPGRQTGRQTQQQISAPE. The segment covering 20–30 has biased composition (low complexity); the sequence is GRQTGRQTQQQ. Positions 76–184 constitute an MSP domain; the sequence is GVTVIPRVAR…PASINMALEA (109 aa).

This is an uncharacterized protein from Caenorhabditis elegans.